A 319-amino-acid polypeptide reads, in one-letter code: MTLAAWFAAFLLDSWLGDPPHWPHPVRWIGKLISLVQRAVRRCCHSERALKVGGAGLWIVVVGLTWLVSWGCLWLMNAIHPWVGWLVEVWMIYTLLAGRCLSDTALEVHGVLQQGLLDESRQQLSWIVGRDTSQLDAPQITRAVVETVAENSVDGVIAPLFFLMIGGAPLAMAYKAINTLDSMVGYKTQEYHAIGYVSARMDDLANWLPARLSWLLLSAAAWFIRLDFRQALRIGWRDRYQHTSPNCGWSEATVAGALGIRLGGPSCYFGERVEKPWMGDERRKIALTDIPLSIYLMMIASQLALLLFALLRLLLVGMA.

4 helical membrane-spanning segments follow: residues Gly-56–Met-76, Val-153–Ala-173, Leu-204–Ile-224, and Ile-290–Leu-310.

The protein belongs to the CobD/CbiB family.

Its subcellular location is the cell membrane. It participates in cofactor biosynthesis; adenosylcobalamin biosynthesis. Converts cobyric acid to cobinamide by the addition of aminopropanol on the F carboxylic group. The sequence is that of Cobalamin biosynthesis protein CobD from Photorhabdus laumondii subsp. laumondii (strain DSM 15139 / CIP 105565 / TT01) (Photorhabdus luminescens subsp. laumondii).